The primary structure comprises 225 residues: Cell wall mannoprotein CIS3 (225 aa).

The first 21 residues, 1–21 (MQFKNVALAASVAALSATASA), serve as a signal peptide directing secretion. A propeptide spanning residues 22–64 (EGYTPGEPWSTLTPTGSISCGAAEYTTTFGIAVQAITSSKAKR) is cleaved from the precursor. A PIR1/2/3 repeat occupies 65 to 82 (DVISQIGDGQVQATSAAA). The O-linked (Man) serine glycan is linked to Ser-68. O-linked (Man) threonine glycosylation is present at Thr-78. Over residues 78-92 (TSAAATDSQVQASST) the composition is skewed to polar residues. Positions 78–128 (TSAAATDSQVQASSTATPTSSEKISSSASKTSSTNATSSSCATPSLKDSSC) are disordered. The span at 93 to 122 (ATPTSSEKISSSASKTSSTNATSSSCATPS) shows a compositional bias: low complexity. O-linked (Man) serine glycans are attached at residues Ser-102, Ser-103, Ser-104, and Ser-106. O-linked (Man) threonine glycosylation is present at Thr-108. O-linked (Man) serine glycosylation is present at Ser-109. O-linked (Man) threonine glycosylation is found at Thr-111 and Thr-114. O-linked (Man) serine glycosylation is found at Ser-115 and Ser-116.

This sequence belongs to the PIR protein family. In terms of processing, covalently linked to beta-1,3-glucan of the inner cell wall layer via an alkali-sensitive ester linkage between the gamma-carboxyl group of glutamic acid, arising from Gln-74 within the PIR1/2/3 repeat, and hydroxyl groups of glucoses of beta-1,3-glucan chains. Extensively O-mannosylated.

Its subcellular location is the secreted. It is found in the cell wall. In terms of biological role, component of the outer cell wall layer. Required for stability of the cell wall and for optimal growth. Required for resistance against several antifungal and cell wall-perturbing agents. The polypeptide is Cell wall mannoprotein CIS3 (CIS3) (Saccharomyces cerevisiae (strain AWRI1631) (Baker's yeast)).